The primary structure comprises 430 residues: 3-phosphoshikimate 1-carboxyvinyltransferase (430 aa).

Positions 23, 24, and 28 each coordinate 3-phosphoshikimate. A phosphoenolpyruvate-binding site is contributed by Lys-23. Residues Gly-95 and Arg-123 each contribute to the phosphoenolpyruvate site. 3-phosphoshikimate-binding residues include Ser-169, Gln-171, Asp-315, and Lys-342. Residue Gln-171 participates in phosphoenolpyruvate binding. Asp-315 serves as the catalytic Proton acceptor. Phosphoenolpyruvate contacts are provided by Arg-346 and Arg-388.

Belongs to the EPSP synthase family. In terms of assembly, monomer.

The protein resides in the cytoplasm. The enzyme catalyses 3-phosphoshikimate + phosphoenolpyruvate = 5-O-(1-carboxyvinyl)-3-phosphoshikimate + phosphate. The protein operates within metabolic intermediate biosynthesis; chorismate biosynthesis; chorismate from D-erythrose 4-phosphate and phosphoenolpyruvate: step 6/7. Catalyzes the transfer of the enolpyruvyl moiety of phosphoenolpyruvate (PEP) to the 5-hydroxyl of shikimate-3-phosphate (S3P) to produce enolpyruvyl shikimate-3-phosphate and inorganic phosphate. In Streptococcus pyogenes serotype M1, this protein is 3-phosphoshikimate 1-carboxyvinyltransferase.